Here is a 96-residue protein sequence, read N- to C-terminus: MDSKSFLLLLLLFCFLFLHDASDLTQAHAHVQGLSNRKMMMMKMESEWVGANGEAEKAKTKGLGLHEELRTVPSGPDPLHHHVNPPRQPRNNFQLP.

Residues 1-21 (MDSKSFLLLLLLFCFLFLHDA) form the signal peptide. The interval 68–96 (ELRTVPSGPDPLHHHVNPPRQPRNNFQLP) is disordered. Residues proline 73 and proline 76 each carry the hydroxyproline modification. O-linked (Ara...) hydroxyproline glycosylation occurs at proline 76.

Belongs to the CLV3/ESR signal peptide family. As to quaternary structure, interacts with the extracellular leucine-rich repeat region of CLV1. Interacts with CLV2. CLV3-derived CLE peptides interacts with a tetrameric complex made of two CLV2/CRN heterodimers. Post-translationally, the MCLV3 peptide contains two hydroxyprolines, but hydroxylation had no direct effect on MCLV3 activity. In terms of processing, the O-glycosylation (arabinosylation) of the hydroxyproline P-76 enhances binding affinity of the MCLV3 peptide for its receptor. As to expression, first detected in heart stage embryos in a patch of cells between the developing cotyledons. In vegetative and inflorescence meristems, expressed in a small cone of cells at the meristem apex.

Its subcellular location is the secreted. It is found in the extracellular space. Functionally, extracellular signal that regulates meristem maintenance. Acts with CLV1 as a ligand-receptor pair in a signal transduction pathway coordinating growth between adjacent meristematic regions and controlling the balance between meristem cell proliferation and differentiation. In terms of biological role, the secreted peptide MCLV3 activates a signal transduction cascade to restrict WUSCHEL (WUS) expression, inducing shoot and root meristem consumption as cells differentiated into other organs. This is Protein CLAVATA 3 from Arabidopsis thaliana (Mouse-ear cress).